The following is a 293-amino-acid chain: Phosphatidylserine decarboxylase proenzyme (293 aa).

Residues D88, H144, and S247 each act as charge relay system; for autoendoproteolytic cleavage activity in the active site. S247 acts as the Schiff-base intermediate with substrate; via pyruvic acid; for decarboxylase activity in catalysis. Pyruvic acid (Ser); by autocatalysis is present on S247.

Belongs to the phosphatidylserine decarboxylase family. PSD-B subfamily. Prokaryotic type I sub-subfamily. In terms of assembly, heterodimer of a large membrane-associated beta subunit and a small pyruvoyl-containing alpha subunit. It depends on pyruvate as a cofactor. In terms of processing, is synthesized initially as an inactive proenzyme. Formation of the active enzyme involves a self-maturation process in which the active site pyruvoyl group is generated from an internal serine residue via an autocatalytic post-translational modification. Two non-identical subunits are generated from the proenzyme in this reaction, and the pyruvate is formed at the N-terminus of the alpha chain, which is derived from the carboxyl end of the proenzyme. The autoendoproteolytic cleavage occurs by a canonical serine protease mechanism, in which the side chain hydroxyl group of the serine supplies its oxygen atom to form the C-terminus of the beta chain, while the remainder of the serine residue undergoes an oxidative deamination to produce ammonia and the pyruvoyl prosthetic group on the alpha chain. During this reaction, the Ser that is part of the protease active site of the proenzyme becomes the pyruvoyl prosthetic group, which constitutes an essential element of the active site of the mature decarboxylase.

The protein resides in the cell membrane. It catalyses the reaction a 1,2-diacyl-sn-glycero-3-phospho-L-serine + H(+) = a 1,2-diacyl-sn-glycero-3-phosphoethanolamine + CO2. It functions in the pathway phospholipid metabolism; phosphatidylethanolamine biosynthesis; phosphatidylethanolamine from CDP-diacylglycerol: step 2/2. Functionally, catalyzes the formation of phosphatidylethanolamine (PtdEtn) from phosphatidylserine (PtdSer). This is Phosphatidylserine decarboxylase proenzyme from Xylella fastidiosa (strain M12).